The sequence spans 451 residues: Methylenetetrahydrofolate--tRNA-(uracil-5-)-methyltransferase TrmFO (451 aa).

An FAD-binding site is contributed by Gly10–Gly15.

This sequence belongs to the MnmG family. TrmFO subfamily. FAD serves as cofactor.

The protein localises to the cytoplasm. It catalyses the reaction uridine(54) in tRNA + (6R)-5,10-methylene-5,6,7,8-tetrahydrofolate + NADH + H(+) = 5-methyluridine(54) in tRNA + (6S)-5,6,7,8-tetrahydrofolate + NAD(+). The catalysed reaction is uridine(54) in tRNA + (6R)-5,10-methylene-5,6,7,8-tetrahydrofolate + NADPH + H(+) = 5-methyluridine(54) in tRNA + (6S)-5,6,7,8-tetrahydrofolate + NADP(+). Catalyzes the folate-dependent formation of 5-methyl-uridine at position 54 (M-5-U54) in all tRNAs. The polypeptide is Methylenetetrahydrofolate--tRNA-(uracil-5-)-methyltransferase TrmFO (Anaeromyxobacter sp. (strain Fw109-5)).